Consider the following 326-residue polypeptide: Heat-inducible transcription repressor HrcA (326 aa).

This sequence belongs to the HrcA family.

Negative regulator of class I heat shock genes (grpE-dnaK-dnaJ and groELS operons). Prevents heat-shock induction of these operons. This Staphylococcus saprophyticus subsp. saprophyticus (strain ATCC 15305 / DSM 20229 / NCIMB 8711 / NCTC 7292 / S-41) protein is Heat-inducible transcription repressor HrcA.